The primary structure comprises 405 residues: S-adenosylmethionine synthase (405 aa).

An ATP-binding site is contributed by 139 to 144; the sequence is GQGSVD.

This sequence belongs to the AdoMet synthase 2 family. The cofactor is Mg(2+).

The catalysed reaction is L-methionine + ATP + H2O = S-adenosyl-L-methionine + phosphate + diphosphate. Its pathway is amino-acid biosynthesis; S-adenosyl-L-methionine biosynthesis; S-adenosyl-L-methionine from L-methionine: step 1/1. Functionally, catalyzes the formation of S-adenosylmethionine from methionine and ATP. This chain is S-adenosylmethionine synthase, found in Thermococcus gammatolerans (strain DSM 15229 / JCM 11827 / EJ3).